A 107-amino-acid chain; its full sequence is CLAVATA3/ESR (CLE)-related protein 13 (107 aa).

An N-terminal signal peptide occupies residues 1-25 (MATTRVSHVLGFLLWISLLIFVSIG). N-linked (GlcNAc...) asparagine glycosylation occurs at Asn-29. The segment at 79–107 (ALPAGGSEIDPRYGVEKRLVPSGPNPLHH) is disordered. Positions 87–97 (IDPRYGVEKRL) are enriched in basic and acidic residues. Hydroxyproline is present on residues Pro-99 and Pro-102. Residue Pro-102 is glycosylated (O-linked (Ara...) hydroxyproline).

The protein belongs to the CLV3/ESR signal peptide family. In terms of processing, the O-glycosylation (arabinosylation) of the hydroxyproline Pro-102 enhances binding affinity of the CLE13p peptide for its receptor. In terms of tissue distribution, mostly expressed in seedlings, roots, flowers, stems and apex, and, to a lower extent, in leaves and siliques.

The protein resides in the secreted. It localises to the extracellular space. In terms of biological role, extracellular signal peptide that regulates cell fate. Represses root apical meristem maintenance. Regulates the transition of protophloem cells from proliferation to differentiation, thus impinging on postembryonic growth capacity of the root meristem; this signaling pathway requires CRN and CLV2. In Arabidopsis thaliana (Mouse-ear cress), this protein is CLAVATA3/ESR (CLE)-related protein 13.